The following is a 33-amino-acid chain: Photosystem II reaction center protein Psb30 (33 aa).

A helical transmembrane segment spans residues 5 to 25; sequence VLAQLTVLTLIVISGPLVIAL.

This sequence belongs to the Psb30/Ycf12 family. PSII is composed of 1 copy each of membrane proteins PsbA, PsbB, PsbC, PsbD, PsbE, PsbF, PsbH, PsbI, PsbJ, PsbK, PsbL, PsbM, PsbT, PsbX, PsbY, PsbZ, Psb30/Ycf12, peripheral proteins of the oxygen-evolving complex and a large number of cofactors. It forms dimeric complexes.

The protein resides in the plastid. It is found in the chloroplast thylakoid membrane. Its function is as follows. A core subunit of photosystem II (PSII), probably helps stabilize the reaction center. This is Photosystem II reaction center protein Psb30 from Cycas taitungensis (Prince sago).